The following is a 444-amino-acid chain: Tubulin beta chain (444 aa).

Residues Gln11, Glu69, Ser138, Gly142, Thr143, Gly144, Asn204, and Asn226 each contribute to the GTP site. Glu69 is a binding site for Mg(2+).

Belongs to the tubulin family. Dimer of alpha and beta chains. A typical microtubule is a hollow water-filled tube with an outer diameter of 25 nm and an inner diameter of 15 nM. Alpha-beta heterodimers associate head-to-tail to form protofilaments running lengthwise along the microtubule wall with the beta-tubulin subunit facing the microtubule plus end conferring a structural polarity. Microtubules usually have 13 protofilaments but different protofilament numbers can be found in some organisms and specialized cells. Mg(2+) serves as cofactor.

The protein localises to the cytoplasm. It is found in the cytoskeleton. Tubulin is the major constituent of microtubules, a cylinder consisting of laterally associated linear protofilaments composed of alpha- and beta-tubulin heterodimers. Microtubules grow by the addition of GTP-tubulin dimers to the microtubule end, where a stabilizing cap forms. Below the cap, tubulin dimers are in GDP-bound state, owing to GTPase activity of alpha-tubulin. The protein is Tubulin beta chain of Trichuris trichiura (Whipworm).